The primary structure comprises 1155 residues: DNA-directed RNA polymerase subunit beta (1155 aa).

The protein belongs to the RNA polymerase beta chain family. In terms of assembly, the RNAP catalytic core consists of 2 alpha, 1 beta, 1 beta' and 1 omega subunit. When a sigma factor is associated with the core the holoenzyme is formed, which can initiate transcription.

The catalysed reaction is RNA(n) + a ribonucleoside 5'-triphosphate = RNA(n+1) + diphosphate. DNA-dependent RNA polymerase catalyzes the transcription of DNA into RNA using the four ribonucleoside triphosphates as substrates. In Borreliella burgdorferi (strain ZS7) (Borrelia burgdorferi), this protein is DNA-directed RNA polymerase subunit beta.